The following is a 417-amino-acid chain: Serine--tRNA ligase (417 aa).

Residue 226-228 (TSE) participates in L-serine binding. ATP-binding positions include 257 to 259 (RRE) and Val273. Glu280 is an L-serine binding site. 344–347 (EVTS) is an ATP binding site. Thr379 contacts L-serine.

Belongs to the class-II aminoacyl-tRNA synthetase family. Type-1 seryl-tRNA synthetase subfamily. As to quaternary structure, homodimer. The tRNA molecule binds across the dimer.

Its subcellular location is the cytoplasm. It carries out the reaction tRNA(Ser) + L-serine + ATP = L-seryl-tRNA(Ser) + AMP + diphosphate + H(+). It catalyses the reaction tRNA(Sec) + L-serine + ATP = L-seryl-tRNA(Sec) + AMP + diphosphate + H(+). Its pathway is aminoacyl-tRNA biosynthesis; selenocysteinyl-tRNA(Sec) biosynthesis; L-seryl-tRNA(Sec) from L-serine and tRNA(Sec): step 1/1. Catalyzes the attachment of serine to tRNA(Ser). Is also able to aminoacylate tRNA(Sec) with serine, to form the misacylated tRNA L-seryl-tRNA(Sec), which will be further converted into selenocysteinyl-tRNA(Sec). The chain is Serine--tRNA ligase from Tropheryma whipplei (strain TW08/27) (Whipple's bacillus).